The primary structure comprises 68 residues: MSAEERLIELEIRVAEQEKTIDELSFVLTEQWKTVDQLSKKLNALTNRFLELEEQAAPDVPVTKPPHW.

It belongs to the SlyX family.

The protein is Protein SlyX homolog of Brucella melitensis biotype 1 (strain ATCC 23456 / CCUG 17765 / NCTC 10094 / 16M).